Reading from the N-terminus, the 352-residue chain is Selenide, water dikinase (352 aa).

Residue Cys-23 is part of the active site. ATP is bound by residues Lys-26 and 54–56 (SRD). Mg(2+) is bound at residue Asp-57. Residues Asp-74, Asp-97, and 145 to 147 (GHS) each bind ATP. Mg(2+) is bound at residue Asp-97. Asp-233 is a Mg(2+) binding site.

It belongs to the selenophosphate synthase 1 family. Class I subfamily. As to quaternary structure, homodimer. The cofactor is Mg(2+).

It catalyses the reaction hydrogenselenide + ATP + H2O = selenophosphate + AMP + phosphate + 2 H(+). In terms of biological role, synthesizes selenophosphate from selenide and ATP. This is Selenide, water dikinase from Shewanella sp. (strain ANA-3).